A 793-amino-acid polypeptide reads, in one-letter code: DnaJ homolog subfamily C member 10 (793 aa).

The N-terminal stretch at 1–32 (MGVWLNKDDFIRDLKRISLCLLILYVVVVVGT) is a signal peptide. Residues 35–100 (NFYSLLGVSK…DLRKKYDKYG (66 aa)) form the J domain. The 103-residue stretch at 130-232 (EIITLERREF…ESLVAFAMQH (103 aa)) folds into the Thioredoxin 1 domain. Cys-158 and Cys-161 are oxidised to a cystine. 2 trxb regions span residues 235–350 (STVT…LPDF) and 348–463 (PDFE…PQNF). Thioredoxin domains follow at residues 454 to 553 (HVTT…IEDL), 557 to 665 (SVVS…SWGL), and 671 to 776 (ASID…ALIY). Cys-480 and Cys-483 are oxidised to a cystine. The N-linked (GlcNAc...) asparagine glycan is linked to Asn-530. 2 disulfides stabilise this stretch: Cys-588/Cys-591 and Cys-700/Cys-703. The short motif at 790–793 (KDEL) is the Prevents secretion from ER element.

In terms of assembly, interacts with HSPA5 (via its J domain). Interacts with EDEM1. In terms of tissue distribution, ubiquitous. Particularly abundant in secretory tissues. Ubiquitous in fetal tissues and tumor tissues. Higher expression in fetal tissues than in adult tissues. Expressed in testis, pancreas, fetal thymus and fetal kidney. High expression in heart, liver, kidney, and testis. Low expression in spleen and skeletal muscle.

It localises to the endoplasmic reticulum lumen. Functionally, endoplasmic reticulum disulfide reductase involved both in the correct folding of proteins and degradation of misfolded proteins. Required for efficient folding of proteins in the endoplasmic reticulum by catalyzing the removal of non-native disulfide bonds formed during the folding of proteins, such as LDLR. Also involved in endoplasmic reticulum-associated degradation (ERAD) by reducing incorrect disulfide bonds in misfolded glycoproteins recognized by EDEM1. Interaction with HSPA5 is required its activity, not for the disulfide reductase activity, but to facilitate the release of DNAJC10 from its substrate. Promotes apoptotic signaling pathway in response to endoplasmic reticulum stress. The chain is DnaJ homolog subfamily C member 10 (Dnajc10) from Mus musculus (Mouse).